The following is a 597-amino-acid chain: Kelch-like protein 21 (597 aa).

Residues 35-103 (LDVTLEAAGG…SYTGRVAVSG (69 aa)) form the BTB domain. In terms of domain architecture, BACK spans 138-239 (CLDMQDFAEA…RRFYLLAHVE (102 aa)). 6 Kelch repeats span residues 287–335 (ILVL…ALGN), 336–382 (DIYV…VLDG), 384–422 (LYVV…ACRG), 424–463 (LYAI…SFAP), 464–512 (KTVT…VLGG), and 513–560 (KLYV…SIFR). Positions 570 to 597 (GRGFELDGGSSDMDVGQPRPPQNPAELH) are disordered. Residues 587–597 (PRPPQNPAELH) are compositionally biased toward pro residues.

Component of the BCR(KLHL21) E3 ubiquitin ligase complex, at least composed of CUL3, KLHL21 and RBX1.

It is found in the cytoplasm. The protein localises to the cytoskeleton. Its subcellular location is the spindle. It functions in the pathway protein modification; protein ubiquitination. Its function is as follows. Substrate-specific adapter of a BCR (BTB-CUL3-RBX1) E3 ubiquitin-protein ligase complex required for efficient chromosome alignment and cytokinesis. The BCR(KLHL21) E3 ubiquitin ligase complex regulates localization of the chromosomal passenger complex (CPC) from chromosomes to the spindle midzone in anaphase and mediates the ubiquitination of AURKB. Ubiquitination of AURKB by BCR(KLHL21) E3 ubiquitin ligase complex may not lead to its degradation by the proteasome. The polypeptide is Kelch-like protein 21 (KLHL21) (Bos taurus (Bovine)).